We begin with the raw amino-acid sequence, 627 residues long: Altered inheritance of mitochondria protein 9, mitochondrial (627 aa).

Residues 1–43 constitute a mitochondrion transit peptide; it reads MIRYTVAGHSRRCVVGASKRVGAIKCITVAATKRFISNKPNEV.

The protein belongs to the AIM9 family.

Its subcellular location is the mitochondrion. The chain is Altered inheritance of mitochondria protein 9, mitochondrial (AIM9) from Saccharomyces cerevisiae (strain ATCC 204508 / S288c) (Baker's yeast).